The sequence spans 232 residues: Protein G1-like3 (232 aa).

Disordered regions lie at residues 20–77 (AGLL…YEAQ) and 189–232 (ARAR…GAAC). Gly residues predominate over residues 38–53 (AGGGGGGGGDGAGGSS). Residues 73-200 (RYEAQKRRDW…ARGVSYEKKK (128 aa)) enclose the ALOG domain. The short motif at 198 to 202 (KKKRK) is the Nuclear localization signal element. Residues 216 to 232 (PHPPPPPPPPPSAGAAC) are compositionally biased toward pro residues.

Belongs to the plant homeotic and developmental regulators ALOG protein family.

The protein resides in the nucleus. Functionally, probable transcription regulator that acts as a developmental regulator by promoting cell growth in response to light. The sequence is that of Protein G1-like3 from Oryza sativa subsp. indica (Rice).